A 373-amino-acid chain; its full sequence is XK-related protein 9 (373 aa).

A run of 8 helical transmembrane segments spans residues 8 to 28 (FMMS…DIVL), 38 to 58 (YVLG…VHCF), 166 to 186 (MVIM…QIAL), 206 to 226 (LFYK…LLFV), 230 to 250 (VALL…FINH), 256 to 276 (SVSM…FTFF), 295 to 315 (VLGT…IFNS), and 318 to 338 (FIPI…FLGV).

It belongs to the XK family. Undergoes proteolytic processing by caspase-3 (CASP3), caspase-6 (CASP6) and caspase-7 (CASP7) to generate the XK-related protein 9, processed form, leading to its activation. Highly expressed in the small intestines; weakly expressed in the pancreas, liver, stomach, and large intestines.

It is found in the cell membrane. The enzyme catalyses a 1,2-diacyl-sn-glycero-3-phospho-L-serine(in) = a 1,2-diacyl-sn-glycero-3-phospho-L-serine(out). With respect to regulation, activated upon caspase cleavage to generate the XK-related protein 9, processed form. Does not act prior the onset of apoptosis. Functionally, phospholipid scramblase that promotes phosphatidylserine exposure on apoptotic cell surface. Phosphatidylserine is a specific marker only present at the surface of apoptotic cells and acts as a specific signal for engulfment. The polypeptide is XK-related protein 9 (Mus musculus (Mouse)).